A 1742-amino-acid chain; its full sequence is Unconventional myosin-Vc (1742 aa).

Alanine 2 is modified (N-acetylalanine). The 55-residue stretch at 8-62 (TQYNRVWIPDPEEVWKSAEIAKDYRVGDKVLRLLLEDGTELDYSVNPESLPPLRN) folds into the Myosin N-terminal SH3-like domain. In terms of domain architecture, Myosin motor spans 67–753 (VGENDLTALS…QVAYLEKLRL (687 aa)). Residue 161–168 (GESGAGKT) coordinates ATP. An actin-binding region spans residues 632-654 (LYLLMETLNATTPHYVRCIKPND). 5 consecutive IQ domains span residues 756–779 (LRQS…FLRE), 780–806 (RRAA…VALK), 807–829 (EAWA…LYQL), 830–854 (IRMA…RKML), and 855–884 (EEHK…FVLN). Residues 884-1351 (NIQLTYRVQR…SKTIGKANDV (468 aa)) adopt a coiled-coil conformation. Residues 1421 to 1697 (NSTINGIKQV…VRKVQALLNS (277 aa)) enclose the Dilute domain.

The protein belongs to the TRAFAC class myosin-kinesin ATPase superfamily. Myosin family. Expressed chiefly in non-neuronal tissues. Particularly abundant in epithelial and glandular tissues including pancreas, prostate, mammary, stomach, colon and lung.

Its function is as follows. May be involved in transferrin trafficking. Likely to power actin-based membrane trafficking in many physiologically crucial tissues. The sequence is that of Unconventional myosin-Vc (MYO5C) from Homo sapiens (Human).